The chain runs to 142 residues: Large ribosomal subunit protein uL13 (142 aa).

This sequence belongs to the universal ribosomal protein uL13 family. Part of the 50S ribosomal subunit.

In terms of biological role, this protein is one of the early assembly proteins of the 50S ribosomal subunit, although it is not seen to bind rRNA by itself. It is important during the early stages of 50S assembly. The sequence is that of Large ribosomal subunit protein uL13 from Wigglesworthia glossinidia brevipalpis.